A 1435-amino-acid chain; its full sequence is Sterol 3-beta-glucosyltransferase (1435 aa).

Disordered regions lie at residues 1–26, 75–107, 123–169, and 185–206; these read MAPD…HQVA, SDEE…KFEG, RFSS…KDTP, and PSFE…RTSP. A compositionally biased stretch (polar residues) spans 85–99; that stretch reads TRQSSESHINRSSID. A compositionally biased stretch (low complexity) spans 123-133; sequence RFSSRSKSKSS. The segment covering 134 to 143 has biased composition (polar residues); it reads NTIARGSRTP. The segment covering 189–206 has biased composition (basic and acidic residues); it reads MPRKSKDPAEVDDERTSP. In terms of domain architecture, GRAM 1 spans 211–258; that stretch reads ERLMEIFKFETPEDVLEEYPCWLMKSVLLQGYMYITTKHICFYAYLPK. A PH domain is found at 262 to 360; that stretch reads EVVKSGYLSK…WVKALQKIIF (99 aa). Disordered regions lie at residues 444 to 477, 527 to 594, 610 to 671, and 727 to 759; these read LSTA…PNAP, DLNR…QASA, QHSP…QAEI, and GKKH…ATPA. The span at 527 to 537 shows a compositional bias: basic and acidic residues; that stretch reads DLNRLTTEHHR. Polar residues-rich tracts occupy residues 539-554, 628-647, and 657-671; these read NSAN…STNR, KSRS…TRTQ, and TTGS…QAEI. Residues 729–742 show a composition bias toward basic and acidic residues; that stretch reads KHYEEPHGIPRDNE. In terms of domain architecture, GRAM 2 spans 760 to 826; it reads DRFRDHFALP…KDIENVDKEK (67 aa). Residues S949, R950, D952, A1252, H1254, H1267, G1271, T1272, D1291, and Q1292 each contribute to the UDP-alpha-D-glucose site.

Belongs to the glycosyltransferase 28 family.

The protein localises to the cytoplasm. It localises to the preautophagosomal structure membrane. The catalysed reaction is a sterol + UDP-alpha-D-glucose = a sterol 3-beta-D-glucoside + UDP + H(+). The enzyme catalyses ergosterol + UDP-alpha-D-glucose = ergosteryl 3-beta-D-glucoside + UDP + H(+). Functionally, sterol glycosyltransferase responsible for the glycosylation of ergosterol to form ergosterol-glucoside. This chain is Sterol 3-beta-glucosyltransferase, found in Sclerotinia sclerotiorum (strain ATCC 18683 / 1980 / Ss-1) (White mold).